A 434-amino-acid polypeptide reads, in one-letter code: N-lysine methyltransferase SMYD2-B (434 aa).

Positions 8 to 242 (PGIEQFASPG…PGQEIYTSYI (235 aa)) constitute an SET domain. 18-20 (KGR) is an S-adenosyl-L-methionine binding site. Zn(2+)-binding residues include C53, C56, C66, C69, C75, C79, H87, and C91. The segment at 53 to 91 (CEQCFTRKKGLAKCGKCKKAFYCNANCQKKNWPMHKLEC) adopts an MYND-type zinc-finger fold. Residues H138, 207 to 208 (NH), and 259 to 261 (YYF) contribute to the S-adenosyl-L-methionine site.

Belongs to the class V-like SAM-binding methyltransferase superfamily.

Its subcellular location is the cytoplasm. It localises to the cytosol. The protein localises to the nucleus. It carries out the reaction L-lysyl(4)-[histone H3] + 3 S-adenosyl-L-methionine = N(6),N(6),N(6)-trimethyl-L-lysyl(4)-[histone H3] + 3 S-adenosyl-L-homocysteine + 3 H(+). The catalysed reaction is L-lysyl-[protein] + S-adenosyl-L-methionine = N(6)-methyl-L-lysyl-[protein] + S-adenosyl-L-homocysteine + H(+). In terms of biological role, protein-lysine N-methyltransferase that methylates both histones and non-histone proteins, including p53/TP53 and RB1. Specifically trimethylates histone H3 'Lys-4' (H3K4me3) in vivo. The activity requires interaction with HSP90alpha. Shows even higher methyltransferase activity on p53/TP53. Monomethylates 'Lys-370' of p53/TP53, leading to decreased DNA-binding activity and subsequent transcriptional regulation activity of p53/TP53. Monomethylates RB1 at 'Lys-860'. This Danio rerio (Zebrafish) protein is N-lysine methyltransferase SMYD2-B (smyd2b).